A 384-amino-acid polypeptide reads, in one-letter code: Chaperone protein DnaJ (384 aa).

Positions 5–70 (DYYEILGVTR…QKKRIYDTYG (66 aa)) constitute a J domain. The segment at 134–212 (GTEKEIRLQT…CNGQGRTRQS (79 aa)) adopts a CR-type zinc-finger fold. Zn(2+) contacts are provided by C147, C150, C164, C167, C186, C189, C200, and C203. CXXCXGXG motif repeat units follow at residues 147-154 (CEECNGSG), 164-171 (CPVCQGSG), 186-193 (CTRCQGMG), and 200-207 (CKTCNGQG). Residues 352–384 (KEKSGEKVRKWPWSKRKDREKKSMAESTREART) form a disordered region.

The protein belongs to the DnaJ family. As to quaternary structure, homodimer. It depends on Zn(2+) as a cofactor.

It is found in the cytoplasm. In terms of biological role, participates actively in the response to hyperosmotic and heat shock by preventing the aggregation of stress-denatured proteins and by disaggregating proteins, also in an autonomous, DnaK-independent fashion. Unfolded proteins bind initially to DnaJ; upon interaction with the DnaJ-bound protein, DnaK hydrolyzes its bound ATP, resulting in the formation of a stable complex. GrpE releases ADP from DnaK; ATP binding to DnaK triggers the release of the substrate protein, thus completing the reaction cycle. Several rounds of ATP-dependent interactions between DnaJ, DnaK and GrpE are required for fully efficient folding. Also involved, together with DnaK and GrpE, in the DNA replication of plasmids through activation of initiation proteins. In Syntrophobacter fumaroxidans (strain DSM 10017 / MPOB), this protein is Chaperone protein DnaJ.